Reading from the N-terminus, the 83-residue chain is ATP synthase subunit c (83 aa).

2 helical membrane-spanning segments follow: residues 10 to 30 and 52 to 72; these read IAVALLIGMGALGTAIGFGLL and MFIVAGLLDAVTMIGVGIALF.

Belongs to the ATPase C chain family. In terms of assembly, F-type ATPases have 2 components, F(1) - the catalytic core - and F(0) - the membrane proton channel. F(1) has five subunits: alpha(3), beta(3), gamma(1), delta(1), epsilon(1). F(0) has three main subunits: a(1), b(2) and c(10-14). The alpha and beta chains form an alternating ring which encloses part of the gamma chain. F(1) is attached to F(0) by a central stalk formed by the gamma and epsilon chains, while a peripheral stalk is formed by the delta and b chains.

It localises to the cell inner membrane. In terms of biological role, f(1)F(0) ATP synthase produces ATP from ADP in the presence of a proton or sodium gradient. F-type ATPases consist of two structural domains, F(1) containing the extramembraneous catalytic core and F(0) containing the membrane proton channel, linked together by a central stalk and a peripheral stalk. During catalysis, ATP synthesis in the catalytic domain of F(1) is coupled via a rotary mechanism of the central stalk subunits to proton translocation. Key component of the F(0) channel; it plays a direct role in translocation across the membrane. A homomeric c-ring of between 10-14 subunits forms the central stalk rotor element with the F(1) delta and epsilon subunits. The chain is ATP synthase subunit c from Shewanella baltica (strain OS223).